Reading from the N-terminus, the 1098-residue chain is Gramicidin S synthase 1 (1098 aa).

One can recognise a Carrier domain in the interval 538-612 (APRNEIEETL…QLVHYIKDSK (75 aa)). O-(pantetheine 4'-phosphoryl)serine is present on S573.

The protein belongs to the ATP-dependent AMP-binding enzyme family. In terms of assembly, large multienzyme complex of GrsA and GrsB. Pantetheine 4'-phosphate serves as cofactor.

It catalyses the reaction L-phenylalanine + ATP + H2O = D-phenylalanine + AMP + diphosphate + H(+). Its pathway is antibiotic biosynthesis; gramicidin S biosynthesis. In the first step of peptide synthesis this enzyme activates phenylalanine and racemizes it to the D-isomer. In Brevibacillus brevis (Bacillus brevis), this protein is Gramicidin S synthase 1 (grsA).